We begin with the raw amino-acid sequence, 394 residues long: Phosphoglycerate kinase (394 aa).

Substrate-binding positions include 21 to 23, R37, 60 to 63, R119, and R152; these read DFN and HLGR. ATP-binding positions include K202, G293, E324, and 350 to 353; that span reads GGDS.

Belongs to the phosphoglycerate kinase family. Monomer.

Its subcellular location is the cytoplasm. The enzyme catalyses (2R)-3-phosphoglycerate + ATP = (2R)-3-phospho-glyceroyl phosphate + ADP. The protein operates within carbohydrate degradation; glycolysis; pyruvate from D-glyceraldehyde 3-phosphate: step 2/5. The polypeptide is Phosphoglycerate kinase (Caldanaerobacter subterraneus subsp. tengcongensis (strain DSM 15242 / JCM 11007 / NBRC 100824 / MB4) (Thermoanaerobacter tengcongensis)).